The chain runs to 393 residues: Staphopain B (393 aa).

An N-terminal signal peptide occupies residues 1–36 (MNSSYKSRVFNIISIIMVSMLILSLGAFANNNKAKA). The propeptide occupies 37–219 (DSHSKQLEIN…KVEENEAIQE (183 aa)). Catalysis depends on residues Cys243, His340, and Asn360.

It belongs to the peptidase C47 family. As to quaternary structure, in the cytoplasm, prematurely activated/folded SspB forms a stable non-covalent complex with SspC. Post-translationally, proteolytically cleaved by staphylococcal serine protease (SspA).

It is found in the secreted. Prematurely activated/folded staphopain B is inhibited by staphostatin B (SspC), which is probably required to protect staphylococcal cytoplasmic proteins from degradation by SspB. Functionally, cysteine protease that plays an important role in the inhibition of host innate immune response. Degrades host elastin, fibrogen, fibronectin and kininogen. Blocks phagocytosis of opsonised S.aureus by neutrophils and monocytes by inducing their death in a proteolytic activity-dependent manner. Decreases surface expression of the 'don't eat me' signal CD31 on neutrophils. Cleaves host galectin-3/LGALS3, thereby inhibiting the neutrophil-activating ability of the lectin. The polypeptide is Staphopain B (sspB) (Staphylococcus aureus (strain MSSA476)).